The sequence spans 281 residues: E3 ubiquitin-protein ligase MARCHF5 (281 aa).

An RING-CH-type zinc finger spans residues 9–78; sequence LPQTMDRSCW…PQCNAEYLIV (70 aa). Residues C17, C20, C36, C38, H46, C49, C68, and C71 each coordinate Zn(2+). Transmembrane regions (helical) follow at residues 102–122, 142–162, 212–232, and 241–261; these read FAAAGIMVGSIYWTAVTYGAV, PLFLLIGLPTIPVMLILGKMI, ILCGALVFPTIATIVGKLMFS, and TILGGIAFVAIKGAFKVYFKQ.

The protein resides in the mitochondrion outer membrane. The protein localises to the endoplasmic reticulum membrane. The catalysed reaction is S-ubiquitinyl-[E2 ubiquitin-conjugating enzyme]-L-cysteine + [acceptor protein]-L-lysine = [E2 ubiquitin-conjugating enzyme]-L-cysteine + N(6)-ubiquitinyl-[acceptor protein]-L-lysine.. Its pathway is protein modification; protein ubiquitination. In terms of biological role, mitochondrial E3 ubiquitin-protein ligase that plays a crucial role in the control of mitochondrial morphology by acting as a positive regulator of mitochondrial fission. May play a role in the prevention of cell senescence acting as a regulator of mitochondrial quality control. The polypeptide is E3 ubiquitin-protein ligase MARCHF5 (MARCHF5) (Gallus gallus (Chicken)).